The chain runs to 2590 residues: 5-methylorsellinic acid synthase (2590 aa).

Residues 6-255 (LLCGSQAIQW…HNQVNRELFA (250 aa)) form an N-terminal acylcarrier protein transacylase domain (SAT) region. One can recognise a Ketosynthase family 3 (KS3) domain in the interval 369–784 (GDSIAIVGMG…GSNAALIVTQ (416 aa)). Active-site for beta-ketoacyl synthase activity residues include Cys534, His669, and His707. The segment at 891–1191 (LAFGGQTGNV…HAVNLGGPEP (301 aa)) is malonyl-CoA:ACP transacylase (MAT) domain. The active-site For acyl/malonyl transferase activity is the Ser978. The N-terminal hotdog fold stretch occupies residues 1263-1393 (PKLVSFVKYL…GTVNISSLTS (131 aa)). Residues 1263–1569 (PKLVSFVKYL…FAKVPTASLK (307 aa)) enclose the PKS/mFAS DH domain. Positions 1267–1568 (SFVKYLDSNR…RFAKVPTASL (302 aa)) are product template (PT) domain. The Proton acceptor; for dehydratase activity role is filled by His1297. Positions 1421-1569 (TSAIQGSLVY…FAKVPTASLK (149 aa)) are C-terminal hotdog fold. Asp1481 functions as the Proton donor; for dehydratase activity in the catalytic mechanism. The tract at residues 1587 to 1612 (LKVTEPSANVPKAQPVSTYPKPMKPA) is disordered. 2 Carrier domains span residues 1617–1691 (AQIR…ASGT) and 1736–1812 (SAQA…IPKP). 2 positions are modified to O-(pantetheine 4'-phosphoryl)serine: Ser1651 and Ser1772. Residues 1980 to 2212 (QHRGEHKLLN…GFRHVDWSDD (233 aa)) are methyltransferase (CMeT) domain. Residues 2282-2590 (LMIHGGGHIM…EGYEFLLRHL (309 aa)) form a thioesterase (TE) domain region.

The enzyme catalyses 3 malonyl-CoA + acetyl-CoA + S-adenosyl-L-methionine + H(+) = 5-methylorsellinate + S-adenosyl-L-homocysteine + 3 CO2 + 4 CoA. It functions in the pathway secondary metabolite biosynthesis. In terms of biological role, non-reducing polyketide synthase; part of the cluster A that mediates the biosynthesis of azasperpyranones, members of the azaphilone family that exhibit anti-cancer activities. Azasperpyranones are synthesized by 2 clusters, A and B. Cluster A is responsible for the production of the polyhydric phenol moiety while the azaphilonoid scaffold is produced by the cluster B. The non-reducing polyketide synthase ATEG_03629 produces 5-methyl orsellinic acid, which is then reduced to 5-methyl orsellinic aldehyde by the NRPS-like protein ATEG_03630. 5-methyl orsellinic aldehyde is then first hydroxylated by the FAD-dependent monooxygenase ATEG_03635 and subsequently hydroxylated by the cytochrome P450 monooxygenase ATEG_03631 to produce the unstable polyhydric phenol precursor of azasperpyranones. On the other hand, the polyketide synthase ATEG_07659 is responsible for producing the 3,5-dimethyloctadienone moiety from acetyl-CoA, three malonyl-CoA, and two S-adenosyl methionines (SAM). The 3,5-dimethyloctadienone moiety is then loaded onto the SAT domain of ATEG_07661 and extended with four malonyl-CoA and one SAM, which leads to the formation of 2,4-dihydroxy-6-(5,7-dimethyl-2-oxo-trans-3-trans-5-nonadienyl)-3-methylbenzaldehyde (compound 8) after reductive release and aldol condensation. The FAD-dependent monooxygenase ATEG_07662 is the next enzyme in the biosynthesis sequence and hydroxylates the side chain at the benzylic position of compound 8. In Aspergillus nidulans, afoF, the ortholog of the FAD-dependent oxygenase ATEG_07660, is the key enzyme for the biosynthesis of asperfuranone by catalyzing the hydroxylation at C-8 of to prevent the formation of a six-membered ring hemiacetal intermediate and thus facilitating the formation of a five-membered ring to produce asperfuranone. In Aspergillus terreus, ATEG_07660 is probably not functional, which leads to the formation of the six-membered ring hemiacetal intermediate presperpyranone instead of asperfuranone. Finally, ATEG_03636 is involved in the condensation of the polyhydric phenol moiety produced by cluster A and the perasperpyranone precursor produced by cluster B, to yield azasperpyranone A. Further modifications of azasperpyranone A result in the production of derivatives, including azasperpyranone B to F. The protein is 5-methylorsellinic acid synthase of Aspergillus terreus (strain NIH 2624 / FGSC A1156).